Consider the following 605-residue polypeptide: Isocitrate dehydrogenase kinase/phosphatase (605 aa).

Residues 327–333 (APGIKGL) and K348 contribute to the ATP site. Residue D383 is part of the active site.

This sequence belongs to the AceK family.

It is found in the cytoplasm. The enzyme catalyses L-seryl-[isocitrate dehydrogenase] + ATP = O-phospho-L-seryl-[isocitrate dehydrogenase] + ADP + H(+). In terms of biological role, bifunctional enzyme which can phosphorylate or dephosphorylate isocitrate dehydrogenase (IDH) on a specific serine residue. This is a regulatory mechanism which enables bacteria to bypass the Krebs cycle via the glyoxylate shunt in response to the source of carbon. When bacteria are grown on glucose, IDH is fully active and unphosphorylated, but when grown on acetate or ethanol, the activity of IDH declines drastically concomitant with its phosphorylation. The protein is Isocitrate dehydrogenase kinase/phosphatase of Burkholderia lata (strain ATCC 17760 / DSM 23089 / LMG 22485 / NCIMB 9086 / R18194 / 383).